An 85-amino-acid polypeptide reads, in one-letter code: Large ribosomal subunit protein bL27 (85 aa).

The segment at 1 to 23 is disordered; that stretch reads MAHKKGQGSTQNNRDSAGRRLGV.

This sequence belongs to the bacterial ribosomal protein bL27 family.

The chain is Large ribosomal subunit protein bL27 from Helicobacter hepaticus (strain ATCC 51449 / 3B1).